Reading from the N-terminus, the 468-residue chain is ATP synthase subunit beta (468 aa).

155-162 contacts ATP; it reads GGAGVGKT.

The protein belongs to the ATPase alpha/beta chains family. In terms of assembly, F-type ATPases have 2 components, CF(1) - the catalytic core - and CF(0) - the membrane proton channel. CF(1) has five subunits: alpha(3), beta(3), gamma(1), delta(1), epsilon(1). CF(0) has three main subunits: a(1), b(2) and c(9-12). The alpha and beta chains form an alternating ring which encloses part of the gamma chain. CF(1) is attached to CF(0) by a central stalk formed by the gamma and epsilon chains, while a peripheral stalk is formed by the delta and b chains.

Its subcellular location is the cell membrane. It catalyses the reaction ATP + H2O + 4 H(+)(in) = ADP + phosphate + 5 H(+)(out). In terms of biological role, produces ATP from ADP in the presence of a proton gradient across the membrane. The catalytic sites are hosted primarily by the beta subunits. The protein is ATP synthase subunit beta of Streptococcus pyogenes serotype M6 (strain ATCC BAA-946 / MGAS10394).